A 274-amino-acid polypeptide reads, in one-letter code: Diaminopimelate epimerase (274 aa).

3 residues coordinate substrate: N11, Q44, and N64. C73 functions as the Proton donor in the catalytic mechanism. Residues 74–75, N157, N190, and 208–209 each bind substrate; these read GN and ER. Residue C217 is the Proton acceptor of the active site. 218–219 serves as a coordination point for substrate; sequence GS.

This sequence belongs to the diaminopimelate epimerase family. In terms of assembly, homodimer.

It localises to the cytoplasm. The catalysed reaction is (2S,6S)-2,6-diaminopimelate = meso-2,6-diaminopimelate. Its pathway is amino-acid biosynthesis; L-lysine biosynthesis via DAP pathway; DL-2,6-diaminopimelate from LL-2,6-diaminopimelate: step 1/1. Functionally, catalyzes the stereoinversion of LL-2,6-diaminopimelate (L,L-DAP) to meso-diaminopimelate (meso-DAP), a precursor of L-lysine and an essential component of the bacterial peptidoglycan. This chain is Diaminopimelate epimerase, found in Erwinia tasmaniensis (strain DSM 17950 / CFBP 7177 / CIP 109463 / NCPPB 4357 / Et1/99).